The following is a 361-amino-acid chain: DNA replication and repair protein RecF (361 aa).

ATP is bound at residue 30–37 (GQNAQGKT).

Belongs to the RecF family.

It is found in the cytoplasm. In terms of biological role, the RecF protein is involved in DNA metabolism; it is required for DNA replication and normal SOS inducibility. RecF binds preferentially to single-stranded, linear DNA. It also seems to bind ATP. This chain is DNA replication and repair protein RecF, found in Streptococcus gordonii (strain Challis / ATCC 35105 / BCRC 15272 / CH1 / DL1 / V288).